Here is a 391-residue protein sequence, read N- to C-terminus: Suppressor APC domain-containing protein 2 (391 aa).

The segment at 1 to 20 (MAVAAMAERGRLSHAAPAPS) is disordered. Residue Thr-218 is modified to Phosphothreonine. Residues 226 to 277 (SLLKQMKELDQEQEVLLQGLEMMARGRDWYQQQLQRVQERQRRLSQSRAAAD) are a coiled coil. A Phosphoserine modification is found at Ser-283. Residues 340–381 (LKEQNRLLTQEVTDKSERITQLEQEKSALIKQLFEARALSQQ) adopt a coiled-coil conformation.

In terms of assembly, interacts with a spindle orientation complex at least composed of GNAI1, GPSM2 and NUMA1. Interacts with GPSM2 (via TPR motifs); this interaction is required to prevent GPSM2 anchoring at the mitotic apical cortex and is inhibited in presence of NUMA1 in a dose dependent manner. Interacts with PARD3. As to expression, expressed in the retina. Expressed in retinal progenitor cells and newly differentiated neurons but not in mature retinal cells (at protein level).

It is found in the cytoplasm. Its subcellular location is the nucleus. It localises to the cell cortex. The protein resides in the apical cell membrane. The protein localises to the cell junction. It is found in the tight junction. Functionally, plays a role in planar mitotic spindle orientation in retinal progenitor cells (RPCs) and promotes the production of symmetric terminal divisions. Negatively regulates the mitotic apical cortex localization of GPSM2. Involved also in positive regulation of cell proliferation and tumor cell growth. The sequence is that of Suppressor APC domain-containing protein 2 from Mus musculus (Mouse).